We begin with the raw amino-acid sequence, 610 residues long: E-selectin (610 aa).

The first 21 residues, M1 to A21, serve as a signal peptide directing secretion. In terms of domain architecture, C-type lectin spans W22–Y139. Residues W22–P556 are Extracellular-facing. A glycan (N-linked (GlcNAc...) asparagine) is linked at N25. 5 disulfides stabilise this stretch: C40/C138, C111/C130, C143/C154, C148/C163, and C165/C174. The Ca(2+) site is built by E101, N103, and E109. Residues E101–E109, E113–R118, and N126–E128 contribute to the a carbohydrate site. The Ca(2+) site is built by N126 and D127. The 36-residue stretch at T140–E175 folds into the EGF-like domain. N145 and N160 each carry an N-linked (GlcNAc...) asparagine glycan. Sushi domains are found at residues V178–V239, V240–A301, T303–A364, Q366–A427, R429–V490, and V491–A549. Residues N179, N199, and N203 are each glycosylated (N-linked (GlcNAc...) asparagine). 14 disulfide bridges follow: C180–C224, C193–C206, C210–C237, C242–C286, C255–C268, C272–C299, C304–C349, C335–C362, C367–C412, C398–C425, C430–C475, C461–C488, C493–C534, and C520–C547. N-linked (GlcNAc...) asparagine glycosylation is present at N265. N-linked (GlcNAc...) asparagine glycans are attached at residues N312 and N332. N-linked (GlcNAc...) asparagine glycosylation is found at N503 and N527. The helical transmembrane segment at L557 to L578 threads the bilayer. Topologically, residues R579–L610 are cytoplasmic.

It belongs to the selectin/LECAM family. Interacts with SELPLG/PSGL1 and PODXL2 through the sialyl Lewis X epitope. SELPLG sulfation appears not to be required for this interaction.

It is found in the cell membrane. In terms of biological role, cell-surface glycoprotein having a role in immunoadhesion. Mediates in the adhesion of blood neutrophils in cytokine-activated endothelium through interaction with SELPLG/PSGL1. May have a role in capillary morphogenesis. In Homo sapiens (Human), this protein is E-selectin (SELE).